Reading from the N-terminus, the 722-residue chain is D-(-)-3-hydroxybutyrate oligomer hydrolase (722 aa).

Polar residues predominate over residues 1–11; that stretch reads MQQRHLSQSAH. The segment at 1 to 20 is disordered; the sequence is MQQRHLSQSAHSHGHGTRRA. Positions 1–36 are cleaved as a signal peptide; it reads MQQRHLSQSAHSHGHGTRRAHRRNTIAIAVATLAVA. The active-site Charge relay system is the Ser327. Positions 671 to 697 are disordered; sequence PPSQVVRTTPRGGADTDTVGPRIQPSN.

This sequence belongs to the D-(-)-3-hydroxybutyrate oligomer hydrolase family.

Its subcellular location is the secreted. It carries out the reaction (3R)-hydroxybutanoate dimer + H2O = 2 (R)-3-hydroxybutanoate + H(+). It functions in the pathway lipid metabolism; butanoate metabolism. In terms of biological role, participates in the degradation of poly-3-hydroxybutyrate (PHB). It works downstream of poly(3-hydroxybutyrate) depolymerase, hydrolyzing D(-)-3-hydroxybutyrate oligomers of various length (3HB-oligomers) into 3HB-monomers. The sequence is that of D-(-)-3-hydroxybutyrate oligomer hydrolase from Cupriavidus metallidurans (strain ATCC 43123 / DSM 2839 / NBRC 102507 / CH34) (Ralstonia metallidurans).